The chain runs to 792 residues: MHVIKRDGRQERVMFDKITSRIQKLCYGLNMDFVDPAQITMKVIQGLYSGVTTVELDTLAAETAATLTTKHPDYAILAARIAVSNLHKEAKKVFSDVMEDLYNYINPHNGKHSPMVAKSTLDIVLANKDRLNSAIIYDRDFSYNYFGFKTLERSYLLKINGKVAERPQHMLMRVSVGIHKEDIDAAIETYNLLSERWFTHASPTLFNAGTNRPQLSSCFLLSMKDDSIEGIYDTLKQCALISKSAGGIGVAVSCIRATGSYIAGTNGNSNGLVPMLRVYNNTARYVDQGGNKRPGAFAIYLEPWHLDIFEFLDLKKNTGKEEQRARDLFFALWIPDLFMKRVETNQDWSLMCPNECPGLDEVWGEEFEKLYASYEKQGRVRKVVKAQQLWYAIIESQTETGTPYMLYKDSCNRKSNQQNLGTIKCSSLCTEIVEYTSKDEVAVCNLASLALNMYVTSEHTYDFKKLAEVTKVVVRNLNKIIDINYYPVPEACLSNKRHRPIGIGVQGLADAFILMRYPFESAEAQLLNKQIFETIYYGALEASCDLAKEQGPYETYEGSPVSKGILQYDMWNVTPTDLWDWKLLKEKIAKYGIRNSLLIAPMPTASTAQILGNNESIEPYTSNIYTRRVLSGEFQIVNPHLLKDLTERGLWHEEMKNQIIACNGSIQSIPEIPDDLKQLYKTVWEISQKTVLKMAAERGAFIDQSQSLNIHIAEPNYGKLTSMHFYGWKQGLKTGMYYLRTRPAANPIQFTLNKEKLKDKEKVSKEEEEKERNTAAMVCSLENRDECLMCGS.

Positions 1–92 (MHVIKRDGRQ…VSNLHKEAKK (92 aa)) constitute an ATP-cone domain. ATP-binding positions include 5 to 6 (KR), 11 to 17 (ERVMFDK), Thr53, and Asp57. An N6-acetyllysine modification is found at Lys17. The GDP site is built by Ser202 and Ser217. Cysteines 218 and 444 form a disulfide. Residues 226-228 (DSI), Lys243, Arg256, and 263-264 (AG) contribute to the dTTP site. Residue Lys376 is modified to N6-acetyllysine. Ser427 acts as the Proton acceptor in catalysis. The active-site Cysteine radical intermediate is the Cys429. GDP contacts are provided by residues Glu431 and 604–607 (TAST). The active-site Proton acceptor is Glu431. Residue Thr751 is modified to Phosphothreonine.

This sequence belongs to the ribonucleoside diphosphate reductase large chain family. Heterodimer of a large and a small subunit. Interacts with RRM2B. Interacts with AHCYL1 which inhibits its activity.

Its subcellular location is the cytoplasm. The enzyme catalyses a 2'-deoxyribonucleoside 5'-diphosphate + [thioredoxin]-disulfide + H2O = a ribonucleoside 5'-diphosphate + [thioredoxin]-dithiol. With respect to regulation, under complex allosteric control mediated by deoxynucleoside triphosphates and ATP binding to separate specificity and activation sites on the M1 subunit. The type of nucleotide bound at the specificity site determines substrate preference. It seems probable that ATP makes the enzyme reduce CDP and UDP, dGTP favors ADP reduction and dTTP favors GDP reduction. Stimulated by ATP and inhibited by dATP binding to the activity site, the dATP inhibition is mediated by AHCYL1 which stabilizes dATP in the site. Provides the precursors necessary for DNA synthesis. Catalyzes the biosynthesis of deoxyribonucleotides from the corresponding ribonucleotides. The sequence is that of Ribonucleoside-diphosphate reductase large subunit (RRM1) from Pongo abelii (Sumatran orangutan).